A 202-amino-acid chain; its full sequence is tRNA (pseudouridine(54)-N(1))-methyltransferase (202 aa).

3 residues coordinate S-adenosyl-L-methionine: leucine 130, glycine 152, and cysteine 185.

Belongs to the methyltransferase superfamily. TrmY family. Homodimer.

The protein localises to the cytoplasm. The enzyme catalyses pseudouridine(54) in tRNA + S-adenosyl-L-methionine = N(1)-methylpseudouridine(54) in tRNA + S-adenosyl-L-homocysteine + H(+). Specifically catalyzes the N1-methylation of pseudouridine at position 54 (Psi54) in tRNAs. This Methanococcoides burtonii (strain DSM 6242 / NBRC 107633 / OCM 468 / ACE-M) protein is tRNA (pseudouridine(54)-N(1))-methyltransferase.